The primary structure comprises 532 residues: Fatty aldehyde dehydrogenase HFD1 (532 aa).

S111 is modified (phosphoserine). A helical transmembrane segment spans residues 134 to 152 (IIAPFNFPLLLAFAPLAAA). Residue 214 to 219 (GSPRVG) participates in NAD(+) binding. Catalysis depends on residues E236 and C273.

It belongs to the aldehyde dehydrogenase family.

The protein localises to the lipid droplet. It is found in the mitochondrion outer membrane. The protein resides in the endosome membrane. Its subcellular location is the cytoplasmic granule membrane. The enzyme catalyses an aldehyde + NAD(+) + H2O = a carboxylate + NADH + 2 H(+). It carries out the reaction hexadecanoate + NADH + 2 H(+) = hexadecanal + NAD(+) + H2O. It catalyses the reaction 4-hydroxybenzaldehyde + NAD(+) + H2O = 4-hydroxybenzoate + NADH + 2 H(+). Catalyzes the oxidation of long-chain aliphatic aldehydes to fatty acids. Responsible for conversion of the sphingosine 1-phosphate (S1P) degradation product hexadecenal to hexadecenoic acid. Involved in coenzyme Q (CoQ) biosynthesis, catalyzing the last step in the tyrosine to 4-hydroxybenzoate (4-HB) pathway. Oxidizes 4-hydroxybenzaldehyde (4-Hbz) to 4-HB, the aromatic precursor for coenzyme Q. The protein is Fatty aldehyde dehydrogenase HFD1 (HFD1) of Saccharomyces cerevisiae (strain ATCC 204508 / S288c) (Baker's yeast).